The primary structure comprises 353 residues: Mitochondrial import inner membrane translocase subunit TIM50 (353 aa).

The N-terminal 44 residues, 1-44 (MAASAAVFSRLRSGLRLGSRGLCTRLATPPRRAPDQAAEIGSRG), are a transit peptide targeting the mitochondrion. Positions 25–60 (RLATPPRRAPDQAAEIGSRGSTKAQGPQQQPGSEGP) are disordered. At S45 the chain carries Phosphoserine. Topologically, residues 45 to 65 (STKAQGPQQQPGSEGPSYAKK) are mitochondrial matrix. Positions 49-60 (QGPQQQPGSEGP) are enriched in low complexity. Residues 66-86 (VALWLAGLLGAGGTVSVVYIF) traverse the membrane as a helical segment. Over 87–353 (GNNPVDENGA…SRLWPRSKQP (267 aa)) the chain is Mitochondrial intermembrane. An FCP1 homology domain is found at 143 to 286 (YYQPPYTLVL…LDLSAFLKTI (144 aa)). At S341 the chain carries Phosphoserine.

The protein belongs to the TIM50 family. Component of the TIM23 complex at least composed of TIMM23, TIMM17 (TIMM17A or TIMM17B) and TIMM50; within this complex, directly interacts with TIMM23. The complex interacts with the TIMM44 component of the PAM complex and with DNAJC15. As to quaternary structure, interacts with COIL and snRNPs. In terms of tissue distribution, widely expressed. Expressed at higher level in brain, kidney and liver (at protein level).

The protein resides in the mitochondrion inner membrane. It localises to the nucleus speckle. Functionally, essential component of the TIM23 complex, a complex that mediates the translocation of transit peptide-containing proteins across the mitochondrial inner membrane. Has some phosphatase activity in vitro; however such activity may not be relevant in vivo. May participate in the release of snRNPs and SMN from the Cajal body. In Homo sapiens (Human), this protein is Mitochondrial import inner membrane translocase subunit TIM50 (TIMM50).